Consider the following 449-residue polypeptide: Glucose-6-phosphate isomerase (449 aa).

Glutamate 291 acts as the Proton donor in catalysis. Residues histidine 312 and lysine 426 contribute to the active site.

The protein belongs to the GPI family.

The protein resides in the cytoplasm. It carries out the reaction alpha-D-glucose 6-phosphate = beta-D-fructose 6-phosphate. Its pathway is carbohydrate biosynthesis; gluconeogenesis. It functions in the pathway carbohydrate degradation; glycolysis; D-glyceraldehyde 3-phosphate and glycerone phosphate from D-glucose: step 2/4. Its function is as follows. Catalyzes the reversible isomerization of glucose-6-phosphate to fructose-6-phosphate. The sequence is that of Glucose-6-phosphate isomerase from Streptococcus pyogenes serotype M49 (strain NZ131).